The following is a 424-amino-acid chain: MVMFSQDHVQIVYGSTRICKSLAPANKRKTHRTIVVAPRRGFLRIPPDGQDVNHVKIVPTTSSSLAPPRDDERRPTPPLRPPLTVYPYGTSLIRRSARDAKLRSKLIVFHITRPALGQHPQNPGISGPAAMDHSEFLTSFRREVDRQTVLTAESAPATAEVCLGDALPGGVMGGGGLPAGVGSASAAVAAAAAAVAGVPVAANPVMPATATVTTPPMIDLTSHHRPLTLFTPASAAAAPAVATNGGNATYILPADCRYAPLFASKYKYVFEEVSRLMRLHDSTAVQLQISASCGNAFQALKSALLKLHNVTVLAGQQLITQTMPHTPQAVATFKFFHQDPNRVLDCIRPVVPRSTSYHETGVYQMWVSGATKKDLFDAVTLCASIVEKQPDVFNINVSLLTYPSIAAPHLPLYNEFTSFRLPTS.

The segment at 57–82 (IVPTTSSSLAPPRDDERRPTPPLRPP) is disordered.

This sequence belongs to the herpesviridae U84 family.

It is found in the host nucleus. Plays a role in the inhibition of host DNA replication in the infected cell. Targets the mini-chromosome maintenance (MCM) complex and blocks the accumulation of MCM proteins and their loading onto host chromatin. This Human cytomegalovirus (strain AD169) (HHV-5) protein is Protein UL117 (UL117).